Reading from the N-terminus, the 1188-residue chain is MAEGGEREELLSPPPISPAKRLCSWPSPQAHHPRGTPGAAGGGAGGGGGGCLAPGARPHLQPESLLDCAAKTVAEKWAYERVEERFERIPEPVQRRIVYWSFPRNEREICMYSSFQYRGGPGAGAAAGAAGASPVEEGPPPPPGAAAPAGSAPGAAGAGSSPGLGAGTGTASGGCGGGEGLPFRRGIRLLDSGSVENVLQVGFHLSGTVTEPAMASEPAVTYKVAISFDRCKITSVSCGCGNKDIFYCAHVVALSLYRIRKPDQVKLRLPISETLFQMNRDQLQKFIQYLITAHHTEVLPTAQKLADEILSSNSEINQVNGAPDPTAGASIDDENCWHLDEEQVKEQVKLFLSQGGYYGSGKQLNSMFAKVREMLRMRDSNGARMLTLITEQFMADPRLTLWRQQGTSMTDKCRQLWDELGALWVCIILNPHCKLEEKSCWLQQLQKWSDLDICPLEDGNYGHELPNITNALSQSASHSPDSLSRPRRTVFTRAIEGRELHWQDSHLQRIISSGIYTAPACQRENERLLFNSHGQPLWLEHVPTACARVDALRSHGYPKEALRLTVAIINTLRLQQQRQLEIYKHQKKELLQRGTTTITNLEGWVGHPLDPIGCLFLTLTEACRLNDDSYMEMSDMNESRLPVYQHVPVASGCPNSNESYLSLALEVALMGMGQQRVMPEGLYAQDKVCRNEEQLLSQLQELQLDDELVQTLRKQCILLLEGGPFSGLGEVIHRESVPMHTFAKYLFSALLPHDPDLSYKLALRAMRLPVLENSSSAGDTSHPHHMVSVVPSRYPRWFTLGHLESQQCELASTMLTAAKGDTLRLRTLLEAIQKHIHSPSLIFKLAQDAFKIATPTDSSTDGTLLNVALELGLQVMRMTLSTLNWRRREMVRWLVTCATEVGVRALVSILQSWYTLFTPTEATSIVAATAVSHTTILRLSLDYPQREELASCARTLALQCAMKDPQSCALSALTLCEKDHIAFEAAYQIAIDAAAGGMTHSQLFTIARYMELRGYPLRAFKLASLAMSHLNLAYNQDTHPAINDVLWACALSHSLGKNELAALIPLVVKSVHCATVLSDILRRCTVTAPGLAGIPGRRSSGKLMSTDKAPLRQLLDATINAYINTTHSRLTHISPRHYGEFIEFLSKARETFLLPQDGHLQFAQFIDNLKQIYKGKKKLMLLVRERFG.

Basic and acidic residues predominate over residues 1–10 (MAEGGEREEL). Disordered regions lie at residues 1-46 (MAEG…GAGG) and 123-171 (AGAA…TGTA). Composition is skewed to low complexity over residues 126 to 136 (AAGAAGASPVE) and 146 to 155 (AAPAGSAPGA). Residues 156-171 (AGAGSSPGLGAGTGTA) show a composition bias toward gly residues. The segment at 222–259 (YKVAISFDRCKITSVSCGCGNKDIFYCAHVVALSLYRI) adopts an SWIM-type zinc-finger fold.

This chain is Zinc finger SWIM domain-containing protein 5 (Zswim5), found in Mus musculus (Mouse).